The chain runs to 401 residues: Enoyl-[acyl-carrier-protein] reductase [NADH] (401 aa).

Residues 48–53, 74–75, 111–112, and 139–140 each bind NAD(+); these read GSSSGY, FE, DA, and LA. Tyr225 is a substrate binding site. Residue Tyr235 is the Proton donor of the active site. NAD(+) contacts are provided by residues Lys244 and 273 to 275; that span reads VVT.

It belongs to the TER reductase family. In terms of assembly, monomer.

The catalysed reaction is a 2,3-saturated acyl-[ACP] + NAD(+) = a (2E)-enoyl-[ACP] + NADH + H(+). The protein operates within lipid metabolism; fatty acid biosynthesis. Involved in the final reduction of the elongation cycle of fatty acid synthesis (FAS II). Catalyzes the reduction of a carbon-carbon double bond in an enoyl moiety that is covalently linked to an acyl carrier protein (ACP). The sequence is that of Enoyl-[acyl-carrier-protein] reductase [NADH] from Shewanella putrefaciens (strain CN-32 / ATCC BAA-453).